The primary structure comprises 521 residues: Aspartic proteinase yapsin-1 (521 aa).

Positions 1-17 (MRIWILIFFSFIKLVSS) are cleaved as a signal peptide. Over 18–500 (LQYTGNGVLA…NAVANAGNSF (483 aa)) the chain is Extracellular. In terms of domain architecture, Peptidase A1 spans 67 to 409 (YTTTLSIGRP…HQSQKMIAIG (343 aa)). The active site involves aspartate 85. N-linked (GlcNAc...) asparagine glycans are attached at residues asparagine 136, asparagine 157, asparagine 250, asparagine 289, asparagine 295, asparagine 354, asparagine 414, asparagine 418, asparagine 460, and asparagine 484. The chain crosses the membrane as a helical span at residues 501-521 (SPLSAMVIMMMSAVFLGLGII).

This sequence belongs to the peptidase A1 family.

The protein localises to the endoplasmic reticulum membrane. It localises to the secreted. It is found in the cell wall. Cleaves at paired basic residues. This Schizosaccharomyces pombe (strain 972 / ATCC 24843) (Fission yeast) protein is Aspartic proteinase yapsin-1 (yps1).